Consider the following 124-residue polypeptide: Large ribosomal subunit protein bL12 (124 aa).

The protein belongs to the bacterial ribosomal protein bL12 family. Homodimer. Part of the ribosomal stalk of the 50S ribosomal subunit. Forms a multimeric L10(L12)X complex, where L10 forms an elongated spine to which 2 to 4 L12 dimers bind in a sequential fashion. Binds GTP-bound translation factors.

Its function is as follows. Forms part of the ribosomal stalk which helps the ribosome interact with GTP-bound translation factors. Is thus essential for accurate translation. In Nautilia profundicola (strain ATCC BAA-1463 / DSM 18972 / AmH), this protein is Large ribosomal subunit protein bL12.